A 330-amino-acid chain; its full sequence is Zinc finger protein Gfi-1b (330 aa).

Positions 1 to 20 are SNAG domain; the sequence is MPRSFLVKSKKAHTYHQPRA. Disordered stretches follow at residues 1–21 and 75–99; these read MPRS…PRAQ and MASA…SESP. Residue K8 is modified to N6,N6-dimethyllysine. The interval 91–330 is interaction with ARIH2; sequence GESPLSESPP…RHRESQHNLK (240 aa). 6 consecutive C2H2-type zinc fingers follow at residues 163 to 186, 192 to 214, 220 to 242, 248 to 270, 276 to 298, and 304 to 327; these read YHCV…RRSH, FACD…THVH, FECR…LLIH, YPCQ…TYIH, HKCQ…SRKH, and FSCE…ESQH. A mediates interaction with GATA1 region spans residues 164-330; the sequence is HCVKCNKVFS…RHRESQHNLK (167 aa).

Interacts with histone methyltransferases EHMT2 and SUV39H1. Interacts with ARIH2 (via RING-type 2) and with RUNX1T1. Forms a complex with GATA1. Component of a RCOR-GFI-KDM1A-HDAC complex. Interacts directly with RCOR1, KDM1A and HDAC2. Post-translationally, methylation at Lys-8 in the SNAG domain seems required for the recruitment of the corepressor complex. In terms of tissue distribution, expressed in bone marrow and in spleen. Detected in hematopoietic stem cells, erythroblasts, and megakaryocytes. Expressed in thymocytes.

Its subcellular location is the nucleus. Functionally, essential proto-oncogenic transcriptional regulator necessary for development and differentiation of erythroid and megakaryocytic lineages. Component of a RCOR-GFI-KDM1A-HDAC complex that suppresses, via histone deacetylase (HDAC) recruitment, a number of genes implicated in multilineage blood cell development and controls hematopoietic differentiation. Transcriptional repressor or activator depending on both promoter and cell type context; represses promoter activity of SOCS1 and SOCS3 and thus, may regulate cytokine signaling pathways. Cooperates with GATA1 to repress target gene transcription, such as the apoptosis regulator BCL2L1; GFI1B silencing in leukemic cell lines markedly increase apoptosis rate. Inhibits down-regulation of MYC and MYB as well as the cyclin-dependent kinase inhibitor CDKN1A/P21WAF1 in IL6-treated myelomonocytic cells. Represses expression of GATA3 in T-cell lymphomas and inhibits GATA1-mediated transcription; as GATA1 also mediates erythroid GFI1B transcription, both GATA1 and GFI1B participate in a feedback regulatory pathway controlling the expression of GFI1B gene in erythroid cells. Suppresses GATA1-mediated stimulation of GFI1B promoter through protein interaction. Binds to gamma-satellite DNA and to its own promoter, auto-repressing its own expression. Alters histone methylation by recruiting histone methyltransferase to target genes promoters. Plays a role in heterochromatin formation. The protein is Zinc finger protein Gfi-1b (Gfi1b) of Mus musculus (Mouse).